A 352-amino-acid chain; its full sequence is GTPase Obg (352 aa).

Residues 1-159 (MHFLDQAKIF…MYVWLRLKLL (159 aa)) enclose the Obg domain. The disordered stretch occupies residues 122-142 (DGGRGNASYKTSTNRAPRQHG). One can recognise an OBG-type G domain in the interval 160 to 328 (ADAGLVGLPN…LLDAVLEYLP (169 aa)). GTP-binding positions include 166–173 (GLPNAGKS), 191–195 (FTTLR), 212–215 (DIPG), 280–283 (NKID), and 309–311 (SGA). Mg(2+) is bound by residues S173 and T193.

It belongs to the TRAFAC class OBG-HflX-like GTPase superfamily. OBG GTPase family. Monomer. Mg(2+) serves as cofactor.

It is found in the cytoplasm. Functionally, an essential GTPase which binds GTP, GDP and possibly (p)ppGpp with moderate affinity, with high nucleotide exchange rates and a fairly low GTP hydrolysis rate. Plays a role in control of the cell cycle, stress response, ribosome biogenesis and in those bacteria that undergo differentiation, in morphogenesis control. The protein is GTPase Obg of Novosphingobium aromaticivorans (strain ATCC 700278 / DSM 12444 / CCUG 56034 / CIP 105152 / NBRC 16084 / F199).